The chain runs to 195 residues: Transcriptional regulator LdrP (195 aa).

One can recognise an HTH crp-type domain in the interval 110–182; sequence GELRARIARY…YRRVYLLDLA (73 aa). Positions 142-161 form a DNA-binding region, H-T-H motif; sequence HEEIADATASIRESVSKVLA.

Functionally, activates transcription. Positively regulates PcrtB promoter upstream of the crtB operon in a cAMP-independent manner. Regulated genes include genes encoding DNA photolyase, phytoene synthase and cytochrome P450 monooxygenase, which are involved in carotenoid biosynthesis. Positively regulates the light-inducible gene cluster in the megaplasmid in a cAMP-independent manner. This chain is Transcriptional regulator LdrP, found in Thermus thermophilus (strain ATCC BAA-163 / DSM 7039 / HB27).